The sequence spans 133 residues: Small ribosomal subunit protein uS8 (133 aa).

Belongs to the universal ribosomal protein uS8 family. As to quaternary structure, part of the 30S ribosomal subunit. Contacts proteins S5 and S12.

One of the primary rRNA binding proteins, it binds directly to 16S rRNA central domain where it helps coordinate assembly of the platform of the 30S subunit. The chain is Small ribosomal subunit protein uS8 from Salinibacter ruber (strain DSM 13855 / M31).